The sequence spans 23 residues: Paralytic peptide 1 (23 aa).

Residues Cys-7 and Cys-19 are joined by a disulfide bond.

Belongs to the GBP/PSP1/paralytic peptide family. As to expression, hemolymph.

Causes rapid, rigid paralysis when injected into Lepidopteran larvae. The physiological role may be to reduce hemolymph loss following injury and promote wound healing. This chain is Paralytic peptide 1, found in Spodoptera exigua (Beet armyworm).